A 348-amino-acid chain; its full sequence is Holliday junction branch migration complex subunit RuvB (348 aa).

The tract at residues 4 to 184 is large ATPase domain (RuvB-L); that stretch reads ADRLIAASGR…FGIVQRLEFY (181 aa). ATP is bound by residues I23, R24, G65, K68, T69, T70, 131–133, R174, Y184, and R221; that span reads EDF. A Mg(2+)-binding site is contributed by T69. Positions 185 to 255 are small ATPAse domain (RuvB-S); it reads NDKDLSTIVS…VADMALNLLD (71 aa). A head domain (RuvB-H) region spans residues 258–348; the sequence is ERGFDHSDRR…GGDFSEPGDE (91 aa). The DNA site is built by R294, R313, and R318.

It belongs to the RuvB family. As to quaternary structure, homohexamer. Forms an RuvA(8)-RuvB(12)-Holliday junction (HJ) complex. HJ DNA is sandwiched between 2 RuvA tetramers; dsDNA enters through RuvA and exits via RuvB. An RuvB hexamer assembles on each DNA strand where it exits the tetramer. Each RuvB hexamer is contacted by two RuvA subunits (via domain III) on 2 adjacent RuvB subunits; this complex drives branch migration. In the full resolvosome a probable DNA-RuvA(4)-RuvB(12)-RuvC(2) complex forms which resolves the HJ.

The protein resides in the cytoplasm. The enzyme catalyses ATP + H2O = ADP + phosphate + H(+). Functionally, the RuvA-RuvB-RuvC complex processes Holliday junction (HJ) DNA during genetic recombination and DNA repair, while the RuvA-RuvB complex plays an important role in the rescue of blocked DNA replication forks via replication fork reversal (RFR). RuvA specifically binds to HJ cruciform DNA, conferring on it an open structure. The RuvB hexamer acts as an ATP-dependent pump, pulling dsDNA into and through the RuvAB complex. RuvB forms 2 homohexamers on either side of HJ DNA bound by 1 or 2 RuvA tetramers; 4 subunits per hexamer contact DNA at a time. Coordinated motions by a converter formed by DNA-disengaged RuvB subunits stimulates ATP hydrolysis and nucleotide exchange. Immobilization of the converter enables RuvB to convert the ATP-contained energy into a lever motion, pulling 2 nucleotides of DNA out of the RuvA tetramer per ATP hydrolyzed, thus driving DNA branch migration. The RuvB motors rotate together with the DNA substrate, which together with the progressing nucleotide cycle form the mechanistic basis for DNA recombination by continuous HJ branch migration. Branch migration allows RuvC to scan DNA until it finds its consensus sequence, where it cleaves and resolves cruciform DNA. The polypeptide is Holliday junction branch migration complex subunit RuvB (Pseudomonas putida (strain ATCC 47054 / DSM 6125 / CFBP 8728 / NCIMB 11950 / KT2440)).